We begin with the raw amino-acid sequence, 388 residues long: Pepsin A-2/A-3 (388 aa).

An N-terminal signal peptide occupies residues 1–15 (MKWLLLLGLVALSEC). Propeptides (activation peptide) lie at residues 16 to 40 (IIHKVPLVRKKSLRRNLSEHGLLKD) and 41 to 62 (FLKKHNFNPASKYFPQAEAPTL). The region spanning 76-385 (YFGTIGIGTP…DRANNQVGLA (310 aa)) is the Peptidase A1 domain. Residue Asp94 is part of the active site. A disulfide bond links Cys107 and Cys112. Ser130 bears the Phosphoserine mark. Cys268 and Cys272 are oxidised to a cystine. Asp277 is an active-site residue. The cysteines at positions 311 and 344 are disulfide-linked.

Belongs to the peptidase A1 family. Post-translationally, pepsin A-2 is phosphorylated, but not pepsin A-3. Each pepsinogen is converted to corresponding pepsin at pH 2.0 in part as a result of the release of a 47 AA activation segment and in part as a result of stepwise proteolytic cleavage via an intermediate form(s).

The protein localises to the secreted. It carries out the reaction Preferential cleavage: hydrophobic, preferably aromatic, residues in P1 and P1' positions. Cleaves 1-Phe-|-Val-2, 4-Gln-|-His-5, 13-Glu-|-Ala-14, 14-Ala-|-Leu-15, 15-Leu-|-Tyr-16, 16-Tyr-|-Leu-17, 23-Gly-|-Phe-24, 24-Phe-|-Phe-25 and 25-Phe-|-Tyr-26 bonds in the B chain of insulin.. Shows particularly broad specificity; although bonds involving phenylalanine and leucine are preferred, many others are also cleaved to some extent. The chain is Pepsin A-2/A-3 from Macaca fuscata fuscata (Japanese macaque).